Consider the following 303-residue polypeptide: Recombination-associated protein RdgC (303 aa).

This sequence belongs to the RdgC family.

The protein resides in the cytoplasm. It is found in the nucleoid. Functionally, may be involved in recombination. The protein is Recombination-associated protein RdgC of Yersinia pseudotuberculosis serotype O:1b (strain IP 31758).